A 314-amino-acid polypeptide reads, in one-letter code: (+)-neomenthol dehydrogenase (314 aa).

13-36 provides a ligand contact to NADP(+); the sequence is VTGGNKGIGYETCRQLASKGVVVV. Position 183 (Ser183) interacts with substrate. Residue Tyr239 is the Proton acceptor of the active site.

It belongs to the short-chain dehydrogenases/reductases (SDR) family. As to quaternary structure, monomer. Expressed in flowers and red fruit tissues. Not detected in leaves, stems, roots or green fruits.

The enzyme catalyses (+)-neomenthol + NADP(+) = (1R,4S)-menthone + NADPH + H(+). Its function is as follows. Involved in basal resistance against pathogens. The protein is (+)-neomenthol dehydrogenase (MNR1) of Capsicum annuum (Capsicum pepper).